The primary structure comprises 280 residues: tRNA dimethylallyltransferase (280 aa).

Residue 9 to 16 (GPTGSGKT) coordinates ATP. 11–16 (TGSGKT) contributes to the substrate binding site. The interval 34 to 37 (DSVS) is interaction with substrate tRNA.

The protein belongs to the IPP transferase family. In terms of assembly, monomer. Mg(2+) serves as cofactor.

The catalysed reaction is adenosine(37) in tRNA + dimethylallyl diphosphate = N(6)-dimethylallyladenosine(37) in tRNA + diphosphate. Its function is as follows. Catalyzes the transfer of a dimethylallyl group onto the adenine at position 37 in tRNAs that read codons beginning with uridine, leading to the formation of N6-(dimethylallyl)adenosine (i(6)A). The sequence is that of tRNA dimethylallyltransferase from Acholeplasma laidlawii (strain PG-8A).